The primary structure comprises 306 residues: Porphobilinogen deaminase (306 aa).

Cys-239 is subject to S-(dipyrrolylmethanemethyl)cysteine.

This sequence belongs to the HMBS family. Monomer. Dipyrromethane is required as a cofactor.

The enzyme catalyses 4 porphobilinogen + H2O = hydroxymethylbilane + 4 NH4(+). Its pathway is porphyrin-containing compound metabolism; protoporphyrin-IX biosynthesis; coproporphyrinogen-III from 5-aminolevulinate: step 2/4. Functionally, tetrapolymerization of the monopyrrole PBG into the hydroxymethylbilane pre-uroporphyrinogen in several discrete steps. The protein is Porphobilinogen deaminase of Helicobacter pylori (strain P12).